A 1391-amino-acid chain; its full sequence is MPAYFQRPENALKRANEFLEVGKKQPALDVLYDVIKSKKHRTWQKIHEPIMLKYLELCVDLRKSHLAKEGLYQYKNICQQVNIKSLEDVVRAYLKLAEERTEAAKESSQQMVLDIEDLDNIQTPESVLLSAVSGEDTQDRTDRLLLTPWVKFLWESYRQCLDLLRNNSKVERLYHDIAQQAFKFCLLYTRKAEFRKLCDNLRMHLSQIQRHHNQSTAINLNNPESQSMHLETRLVQLDSAISMELWQEAFKAVEDIHGLFALSKKPPKPQLMANYYNKVSTVFWKSGNTLFHASTLHRLYHLSREMRKNLTQEEMQRMSTRVLLATLSIPITPERTDIARLLDMDGIILEKQRRLATLLGLQAPPTRVGLINDMVRFNMLQYVVPEVKELYNWLEMDFHPLKLCTRVTKVLDWVKEQAEKEPELQQYVPQLQSNTILRLLQQVAQLYQTIEFSRLASLVPFVDAFLLERAIVDAARHCDLQVRIDHSSRTLSFGSDLNYSTREDAPFGPFLQNMPSEQIRNQLTAMSCVLSKAVGAIKPAHVLQEKEEQHQIAITAYQKNSRKEHQRILARRQTIEERKERLENLNIQREKEEMEQKEAELQKVRKAEEERLRQEAKEREKERILQEHEQIKKKTVRERLEQIKKTELGAKAFKDIDIENLEELDPDFIMAKQVEQLEKEKKELQERLKNQEKKIDYFERAKRLEEIPLLKKAYEEQRINDMELWELQEEERISTLLLEREKAVEHKNRMSRMVEDKELFVSKLKASRQSLYEAKLKQFQERLAEEKAARLEERKRERKEERRVNYYRDKEEEEERLREEQLKQEREEQEKVENEKREAEQRDYQERLKKLEEQERKKRQRELEIEERERKREEERRGGDDTFRKDSSRWGEREESGWRRGADPDERKQVPPERDWRRGGPDSKPVINEDASNREEDENAALRKDEEQVSSRAFEEKVSLPDADEEKGGSWRDEDRGPKRGLEEDRGPRRGIDDAGPRRGFEEDRGPRRGIEDDRAPRRGFDDDRGPRRGFDDDRGPRRGFDEDRGPRRGIDDDRGPRRGFDEDRTPRRGFDDDRGPRRGFDDDRGPRRGFDEDRGPRRGFEDDRGPRRGFEDDRGPRRGFEDDRGPRRGFEDDRGPRRGFEDDRGPRRGFDEDRGPRRGFEDDRGPRRGFDEDRTPRRGFDDDRGPRRGLDEDRGSWRGGDDVPRRGADDDRGPRRGADDDRGPRRGEDRDQTPWKPMAASRPGGWREREKAREDSWGPPRDSQAPEEREWSRQGEDSEKDSERDRRPVREESAWRRGGDNSETPRKPSPGDSDRKDDSDKKRPPKTDEANPWRRGEDKDSREEERGTPRRAPAADREKSAWRTEKKEEKDTPRRIKPETDEDGWTTVRR.

The PCI domain maps to methionine 315–asparagine 498. 6 stretches are compositionally biased toward basic and acidic residues: residues aspartate 809–proline 921, alanine 940–serine 959, glutamate 966–threonine 1234, glycine 1246–serine 1257, glutamine 1265–arginine 1307, and aspartate 1313–glutamate 1380. Residues aspartate 809–arginine 1391 form a disordered region. 2 tandem repeats follow at residues aspartate 973–leucine 982 and glutamate 983–isoleucine 992. The tract at residues aspartate 973–glutamate 1229 is 26 X 10 AA approximate tandem repeats of [DE]-[DE]-[DE]-R-[GATV]-[PS]-[KRW]-R-G-[AEFGIL]. Residues aspartate 993–phenylalanine 1001 form a 3; approximate repeat. A run of 20 repeats spans residues glutamate 1002–isoleucine 1011, glutamate 1012–phenylalanine 1021, aspartate 1022–phenylalanine 1031, aspartate 1032–phenylalanine 1041, aspartate 1042–isoleucine 1051, aspartate 1052–phenylalanine 1061, aspartate 1062–phenylalanine 1071, aspartate 1072–phenylalanine 1081, aspartate 1082–phenylalanine 1091, aspartate 1092–phenylalanine 1101, glutamate 1102–phenylalanine 1111, glutamate 1112–glycine 1120, glutamate 1122–phenylalanine 1131, glutamate 1132–phenylalanine 1141, glutamate 1142–phenylalanine 1151, aspartate 1152–phenylalanine 1161, glutamate 1162–phenylalanine 1171, aspartate 1172–phenylalanine 1181, aspartate 1182–leucine 1191, and aspartate 1192–glycine 1201. The 24; approximate repeat unit spans residues aspartate 1202–alanine 1209. 2 repeat units span residues aspartate 1210–alanine 1219 and aspartate 1220–glutamate 1229.

This sequence belongs to the eIF-3 subunit A family. As to quaternary structure, component of the eukaryotic translation initiation factor 3 (eIF-3) complex, which is composed of 13 subunits: eif3a, eif3b, eif3c, eif3d, eif3e, eif3f, eif3g, eif3h, eif3i, eif3j, eif3k, eif3l and eif3m.

It localises to the cytoplasm. RNA-binding component of the eukaryotic translation initiation factor 3 (eIF-3) complex, which is involved in protein synthesis of a specialized repertoire of mRNAs and, together with other initiation factors, stimulates binding of mRNA and methionyl-tRNAi to the 40S ribosome. The eIF-3 complex specifically targets and initiates translation of a subset of mRNAs involved in cell proliferation. This chain is Eukaryotic translation initiation factor 3 subunit A (eif3a), found in Xenopus tropicalis (Western clawed frog).